A 671-amino-acid chain; its full sequence is DNA ligase (671 aa).

NAD(+) is bound by residues D32–D36, S81–L82, and E113. K115 functions as the N6-AMP-lysine intermediate in the catalytic mechanism. Residues R136, E173, K290, and K314 each contribute to the NAD(+) site. Residues C408, C411, C426, and C432 each contribute to the Zn(2+) site. One can recognise a BRCT domain in the interval E593 to S671.

This sequence belongs to the NAD-dependent DNA ligase family. LigA subfamily. The cofactor is Mg(2+). Requires Mn(2+) as cofactor.

It carries out the reaction NAD(+) + (deoxyribonucleotide)n-3'-hydroxyl + 5'-phospho-(deoxyribonucleotide)m = (deoxyribonucleotide)n+m + AMP + beta-nicotinamide D-nucleotide.. Functionally, DNA ligase that catalyzes the formation of phosphodiester linkages between 5'-phosphoryl and 3'-hydroxyl groups in double-stranded DNA using NAD as a coenzyme and as the energy source for the reaction. It is essential for DNA replication and repair of damaged DNA. The protein is DNA ligase of Escherichia coli O17:K52:H18 (strain UMN026 / ExPEC).